A 273-amino-acid chain; its full sequence is 3-methyl-2-oxobutanoate hydroxymethyltransferase (273 aa).

2 residues coordinate Mg(2+): Asp53 and Asp92. Residues 53 to 54 (DS), Asp92, and Lys122 each bind 3-methyl-2-oxobutanoate. Glu124 is a binding site for Mg(2+). Glu191 serves as the catalytic Proton acceptor.

It belongs to the PanB family. Homodecamer; pentamer of dimers. Requires Mg(2+) as cofactor.

Its subcellular location is the cytoplasm. It catalyses the reaction 3-methyl-2-oxobutanoate + (6R)-5,10-methylene-5,6,7,8-tetrahydrofolate + H2O = 2-dehydropantoate + (6S)-5,6,7,8-tetrahydrofolate. Its pathway is cofactor biosynthesis; (R)-pantothenate biosynthesis; (R)-pantoate from 3-methyl-2-oxobutanoate: step 1/2. Its function is as follows. Catalyzes the reversible reaction in which hydroxymethyl group from 5,10-methylenetetrahydrofolate is transferred onto alpha-ketoisovalerate to form ketopantoate. The protein is 3-methyl-2-oxobutanoate hydroxymethyltransferase of Phocaeicola vulgatus (strain ATCC 8482 / DSM 1447 / JCM 5826 / CCUG 4940 / NBRC 14291 / NCTC 11154) (Bacteroides vulgatus).